Reading from the N-terminus, the 278-residue chain is Ras-related protein Rab-40A-like (278 aa).

Positions 26, 27, and 28 each coordinate GTP. Residue Ser-28 coordinates Mg(2+). The tract at residues 41–49 (SPYSHLGGI) is switch-I. Mg(2+) is bound at residue Asp-69. Residues Gly-72, Asn-126, and Arg-127 each contribute to the GTP site. The tract at residues 72-88 (GQGRFCTIFRSYSRGAQ) is switch-II. An SOCS box domain is found at 175-228 (LLRHRLNWLGRPSKVLSLQDLCCRTIVSCTPVHLVDKLPLPIALRSHLKSFSMA). Cys-270 carries the S-palmitoyl cysteine lipid modification. The S-geranylgeranyl cysteine moiety is linked to residue Cys-275.

Belongs to the small GTPase superfamily. Rab family. Mg(2+) serves as cofactor. As to expression, expressed in brain, lung, heart, skeletal muscle, kidney and liver. Highest expression in brain. Expressed in fetal brain and kidney.

It localises to the membrane. Its subcellular location is the cytoplasm. The protein resides in the mitochondrion. The enzyme catalyses GTP + H2O = GDP + phosphate + H(+). It participates in protein modification; protein ubiquitination. Regulated by guanine nucleotide exchange factors (GEFs) which promote the exchange of bound GDP for free GTP. Regulated by GTPase activating proteins (GAPs) which increase the GTP hydrolysis activity. Inhibited by GDP dissociation inhibitors (GDIs). Its function is as follows. May act as substrate-recognition component of the ECS(RAB40) E3 ubiquitin ligase complex which mediates the ubiquitination and subsequent proteasomal degradation of target proteins. The Rab40 subfamily belongs to the Rab family that are key regulators of intracellular membrane trafficking, from the formation of transport vesicles to their fusion with membranes. Rabs cycle between an inactive GDP-bound form and an active GTP-bound form that is able to recruit to membranes different sets of downstream effectors directly responsible for vesicle formation, movement, tethering and fusion. The polypeptide is Ras-related protein Rab-40A-like (Homo sapiens (Human)).